Consider the following 155-residue polypeptide: MVQCTDCKKWRLIPSMQHYNIIKETQLQTPFVCGTTSGWTPNMSCNVPQDGTTCDTWPSIPPIPTGWSRSVHIRSESTKFADVYYFPPSGERLRSSAEVQSFLDNHPEYVREGVNRSQFSFQIPKPLDDNYVKKRTRPVKRRKSSKDNNCEKGKK.

The CW-type zinc finger occupies 1–53 (MVQCTDCKKWRLIPSMQHYNIIKETQLQTPFVCGTTSGWTPNMSCNVPQDGTT). An MBD-associated domain (MAD) motif is present at residues 3-45 (QCTDCKKWRLIPSMQHYNIIKETQLQTPFVCGTTSGWTPNMSC). Zn(2+) contacts are provided by Cys-4, Cys-7, Cys-33, and Cys-45. The MBD domain maps to 53–126 (TCDTWPSIPP…SQFSFQIPKP (74 aa)). The disordered stretch occupies residues 130–155 (NYVKKRTRPVKRRKSSKDNNCEKGKK). A compositionally biased stretch (basic residues) spans 133–144 (KKRTRPVKRRKS). The Nuclear localization signal signature appears at 140 to 147 (KRRKSSKD). Basic and acidic residues predominate over residues 145 to 155 (SKDNNCEKGKK).

Its subcellular location is the nucleus. Probable transcriptional regulator. The sequence is that of Putative methyl-CpG-binding domain protein 12 (MBD12) from Arabidopsis thaliana (Mouse-ear cress).